Here is a 1025-residue protein sequence, read N- to C-terminus: Probable outer membrane protein PmpF (1025 aa).

An N-terminal signal peptide occupies residues Met-1–Ala-20. Positions Asn-654–Thr-681 are disordered. The span at Gln-659–Thr-681 shows a compositional bias: polar residues. One can recognise an Autotransporter domain in the interval Leu-748–Phe-1025.

Belongs to the PMP outer membrane protein family.

Its subcellular location is the secreted. The protein resides in the cell wall. The protein localises to the cell outer membrane. The polypeptide is Probable outer membrane protein PmpF (pmpF) (Chlamydia muridarum (strain MoPn / Nigg)).